Consider the following 518-residue polypeptide: Vesicular inhibitory amino acid transporter (518 aa).

Residues 1–125 (MATLIRSKLS…WNVTNAIQGM (125 aa)) are Cytoplasmic-facing. Positions 66-98 (EVPSGDPTAEGDSHYQRDGTGPPSSASKDEGLC) are disordered. The chain crosses the membrane as a helical span at residues 126–146 (FVLGLPYAILHGGYLGLFLII). Residues 147–197 (FAAVVCCYTGKILIACLYEENEDGETVRVRDSYVDIANACCAPRFPKLGGR) are Lumenal, vesicle-facing. Residues 198–218 (VVNVAQIIELVMTCILYVVVS) traverse the membrane as a helical segment. Topologically, residues 219–258 (GNLMYNSFPSLPISQKSWSIIATAMLLPCAFLKNLKAVSK) are cytoplasmic. Residues 259 to 279 (FSLLCTLAHFVINVLVIAYCL) traverse the membrane as a helical segment. Over 280 to 298 (SRARDWAWDKVKFYIDVKK) the chain is Lumenal, vesicle. Residues 299 to 319 (FPISIGIIVFSYTSQIFLPSL) form a helical membrane-spanning segment. Topologically, residues 320–334 (EGNMQSPKEFHCMMN) are cytoplasmic. The helical transmembrane segment at 335–355 (WTHIAACILKGLFALVAYLTW) threads the bilayer. Residues 356-376 (ADETKEVITDNLPSTIRAVVN) lie on the Lumenal, vesicle side of the membrane. Residues 377–397 (LFLVAKALLSYPLPFFAAVEV) form a helical membrane-spanning segment. The Cytoplasmic segment spans residues 398–431 (LEKSLFQEGARAFFPNCYGGDGRLKSWGLTLRCA). The chain crosses the membrane as a helical span at residues 432-452 (LVVFTLLMAIYVPHFALLMGL). Topologically, residues 453–454 (TG) are lumenal, vesicle. A helical transmembrane segment spans residues 455–475 (SLTGAGLCFLLPSLFHLKLLW). The Cytoplasmic portion of the chain corresponds to 476–482 (RKLQWHQ). A helical membrane pass occupies residues 483–503 (VFFDVSIFVIGSICSVSGFVH). Topologically, residues 504–518 (SLEGLIEAFRFNIED) are lumenal, vesicle.

The protein belongs to the amino acid/polyamine transporter 2 family.

It is found in the cytoplasmic vesicle membrane. Its subcellular location is the presynapse. The catalysed reaction is 4-aminobutanoate(out) + n H(+)(in) = 4-aminobutanoate(in) + n H(+)(out). It carries out the reaction glycine(out) + n H(+)(in) = glycine(in) + n H(+)(out). The enzyme catalyses beta-alanine(out) + n H(+)(in) = beta-alanine(in) + n H(+)(out). Functionally, antiporter that exchanges vesicular protons for cytosolic 4-aminobutanoate or to a lesser extend glycine, thus allowing their secretion from nerve terminals. The transport is equally dependent on the chemical and electrical components of the proton gradient. May also transport beta-alanine. Acidification of GABAergic synaptic vesicles is a prerequisite for 4-aminobutanoate uptake. This chain is Vesicular inhibitory amino acid transporter, found in Xenopus tropicalis (Western clawed frog).